The chain runs to 2326 residues: Telomere-associated protein RIF1 (2326 aa).

Disordered regions lie at residues 381-410 (QGTP…SPAT), 1105-1965 (YTQS…CITP), and 1993-2050 (VENK…DDSL). Polar residues predominate over residues 382–396 (GTPSRVPSNPNSANP). Basic and acidic residues-rich tracts occupy residues 1112–1126 (SLEK…EDFK) and 1150–1182 (CKVD…RGDR). A compositionally biased stretch (low complexity) spans 1216 to 1225 (SAISCSSTSS). 2 stretches are compositionally biased toward polar residues: residues 1233 to 1242 (QPASRRQSFI) and 1252 to 1270 (SRPF…SQSA). Residues 1290 to 1299 (KSGEESRKSS) are compositionally biased toward basic and acidic residues. 2 stretches are compositionally biased toward polar residues: residues 1318-1332 (MEQQ…VTNS) and 1341-1353 (SFVS…SPES). The span at 1376 to 1402 (PDIKKAEAVMAEIEKVRAFEMDSKENT) shows a compositional bias: basic and acidic residues. Polar residues predominate over residues 1403 to 1412 (PPKTAVSSEQ). Composition is skewed to basic and acidic residues over residues 1448–1480 (QDKE…DASQ), 1489–1511 (ASEH…DLGS), and 1519–1539 (GADE…KSDS). The span at 1564-1573 (SSQGLLSSIE) shows a compositional bias: polar residues. Basic residues predominate over residues 1586-1595 (SLKKKSGKTK). The segment covering 1596–1609 (NKSDSLEGKRKDVQ) has biased composition (basic and acidic residues). 2 stretches are compositionally biased toward polar residues: residues 1610-1640 (PESQ…SEVS) and 1671-1683 (RTSP…SVEQ). The span at 1697-1712 (RVSDEVLKGDENKCIE) shows a compositional bias: basic and acidic residues. Positions 1713–1745 (KQSSVEQHSSVQPENVQGANTSGSDLSSLQMQD) are enriched in polar residues. Basic and acidic residues predominate over residues 1776–1785 (SKSEDPRELI). A compositionally biased stretch (polar residues) spans 1795 to 1813 (AVSTAEVSGSSNLEESLSI). Basic and acidic residues-rich tracts occupy residues 1869-1884 (VEIK…DRAE), 1908-1925 (SEEK…HGEM), and 1932-1954 (DGSK…KEEA). Residues 2009–2036 (SFTSVNGSPSGVQARCTWSPSASPSTSI) show a composition bias toward polar residues.

Belongs to the RIF1 family. Interacts with TP53BP1 (when phosphorylated by ATM).

The protein localises to the nucleus. It localises to the chromosome. It is found in the telomere. The protein resides in the cytoplasm. Its subcellular location is the cytoskeleton. The protein localises to the spindle. Its function is as follows. Key regulator of TP53BP1 that plays a key role in the repair of double-strand DNA breaks (DSBs) in response to DNA damage: acts by promoting non-homologous end joining (NHEJ)-mediated repair of DSBs. In response to DNA damage, interacts with ATM-phosphorylated TP53BP1, allowing recruitment to DNA DSBs. Once recruited to DSBs, RIF1 and TP53BP1 act by promoting NHEJ-mediated repair of DSBs. In the same time, RIF1 and TP53BP1 specifically counteract DSBs resection via homologous recombination (HR) during G1 phase. The protein is Telomere-associated protein RIF1 of Gallus gallus (Chicken).